The following is a 290-amino-acid chain: Carbonic anhydrase-related protein (290 aa).

A Phosphoserine modification is found at serine 5. Residues valine 27–phenylalanine 289 enclose the Alpha-carbonic anhydrase domain. Histidine 87 (proton donor/acceptor) is an active-site residue. Zn(2+) contacts are provided by histidine 118 and histidine 141.

The protein belongs to the alpha-carbonic anhydrase family.

Does not have a carbonic anhydrase catalytic activity. The sequence is that of Carbonic anhydrase-related protein (Ca8) from Rattus norvegicus (Rat).